We begin with the raw amino-acid sequence, 159 residues long: Transcription elongation factor GreA (159 aa).

A coiled-coil region spans residues 46–73 (AEYHAAKEEQSFVEGRIKEIELKLSRMQ).

The protein belongs to the GreA/GreB family.

Necessary for efficient RNA polymerase transcription elongation past template-encoded arresting sites. The arresting sites in DNA have the property of trapping a certain fraction of elongating RNA polymerases that pass through, resulting in locked ternary complexes. Cleavage of the nascent transcript by cleavage factors such as GreA or GreB allows the resumption of elongation from the new 3'terminus. GreA releases sequences of 2 to 3 nucleotides. This Vesicomyosocius okutanii subsp. Calyptogena okutanii (strain HA) protein is Transcription elongation factor GreA.